Reading from the N-terminus, the 136-residue chain is Histone H2A (136 aa).

Positions 1–11 (MTGGGKSGGKA) are enriched in gly residues. Residues 1–24 (MTGGGKSGGKASGSKNAQSRSSKA) are disordered. N6-acetyllysine occurs at positions 6 and 10. Residue Q107 is modified to N5-methylglutamine. The residue at position 133 (S133) is a Phosphoserine. The short motif at 133 to 134 (SQ) is the [ST]-Q motif element.

Belongs to the histone H2A family. As to quaternary structure, the nucleosome is a histone octamer containing two molecules each of H2A, H2B, H3 and H4 assembled in one H3-H4 heterotetramer and two H2A-H2B heterodimers. The octamer wraps approximately 147 bp of DNA. Post-translationally, phosphorylated to form H2AS128ph (gamma-H2A) in response to DNA double-strand breaks (DSBs) generated by exogenous genotoxic agents and by stalled replication forks. Phosphorylation is dependent on the DNA damage checkpoint kinases MEC1/ATR and TEL1/ATM, spreads on either side of a detected DSB site and may mark the surrounding chromatin for recruitment of proteins required for DNA damage signaling and repair. Gamma-H2A is removed from the DNA prior to the strand invasion-primer extension step of the repair process and subsequently dephosphorylated. Dephosphorylation is necessary for efficient recovery from the DNA damage checkpoint. Acetylated by ESA1 to form H2AK4ac and H2AK7ac.

The protein resides in the nucleus. Its subcellular location is the chromosome. Its function is as follows. Core component of nucleosome which plays a central role in DNA double strand break (DSB) repair. Nucleosomes wrap and compact DNA into chromatin, limiting DNA accessibility to the cellular machineries which require DNA as a template. Histones thereby play a central role in transcription regulation, DNA repair, DNA replication and chromosomal stability. DNA accessibility is regulated via a complex set of post-translational modifications of histones, also called histone code, and nucleosome remodeling. The sequence is that of Histone H2A (HTA1) from Pyricularia oryzae (strain Y34) (Rice blast fungus).